Reading from the N-terminus, the 548-residue chain is Chaperonin GroEL (548 aa).

ATP is bound by residues 29–32 (TMGP), lysine 50, 86–90 (DGTTT), glycine 414, 478–480 (NAA), and aspartate 494.

The protein belongs to the chaperonin (HSP60) family. As to quaternary structure, forms a cylinder of 14 subunits composed of two heptameric rings stacked back-to-back. Interacts with the co-chaperonin GroES.

It localises to the cytoplasm. It catalyses the reaction ATP + H2O + a folded polypeptide = ADP + phosphate + an unfolded polypeptide.. Functionally, together with its co-chaperonin GroES, plays an essential role in assisting protein folding. The GroEL-GroES system forms a nano-cage that allows encapsulation of the non-native substrate proteins and provides a physical environment optimized to promote and accelerate protein folding. This Legionella pneumophila (strain Corby) protein is Chaperonin GroEL.